The following is a 693-amino-acid chain: MAQGSHQIDFQVLHDLRQKFPEVPEVVVSRCMLQNNNNLDACCAVLSQESTRYLYGEGDLNFSDESGISGLRNHMTSLNLDLQSQNVYHHGREGSRVNGSRTLTHSVSDGQLHGGQSNNELFQQEPQTAPAQVPQGFNVFGMPSTSGASNSTPHLGFHLGSKGTSNLSQQTPRFNPIMVTLAPNIQTGRSTPTSLHIHGVPPPVLNSPQGNSIYIRPYITTPSGTARQTQQHSGWVSQFNPMNPQQAYQPSQPGPWTTYPASNPLPHTSTQQPNQQGHQTSHVYMPISSPTTPQPPTIHSSGSSQSSAHSQYNIQNISTGPRKNQIEIKLEPPQRNSSSKLRSSGPRTASTSSLVNSQTLNRNQPTVYIAASPPNTDEMISRSQPKVYISANATAGDEQGMRNQPTLFISTNSGPSAASRNMSGQVSMGPAFIHHHPPKSRVLGGNSATSPRVVVTQPNTKYTFKITVSPNKPPAVSPGVVSPTFELTNLLNHPDHYVETENIQHLTDPALAHVDRISEARKLSMGSDDAAYTQALLVHQKARMERLQRELEMQKKKLDKLKSEVNEMENNLTRRRLKRSNSISQIPSLEEMQQLRSCNRQLQIDIDCLTKEIDLFQARGPHFNPSAIHNFYDNIGFVGPVPPKPKDQRSTIKAPKTQDAEDEEGAQWNCTACTFLNHPALIRCEQCEMPRHF.

Residues 8–51 (IDFQVLHDLRQKFPEVPEVVVSRCMLQNNNNLDACCAVLSQEST) form the CUE domain. Residues 90–171 (HGREGSRVNG…KGTSNLSQQT (82 aa)) are disordered. 3 stretches are compositionally biased toward polar residues: residues 97 to 130 (VNGS…QTAP), 143 to 153 (PSTSGASNSTP), and 162 to 171 (KGTSNLSQQT). An Asymmetric dimethylarginine modification is found at Arg173. A compositionally biased stretch (polar residues) spans 223–282 (SGTARQTQQHSGWVSQFNPMNPQQAYQPSQPGPWTTYPASNPLPHTSTQQPNQQGHQTSH). The disordered stretch occupies residues 223–310 (SGTARQTQQH…SGSSQSSAHS (88 aa)). Over residues 286–310 (PISSPTTPQPPTIHSSGSSQSSAHS) the composition is skewed to low complexity. Lys329 participates in a covalent cross-link: Glycyl lysine isopeptide (Lys-Gly) (interchain with G-Cter in SUMO). Positions 330-380 (LEPPQRNSSSKLRSSGPRTASTSSLVNSQTLNRNQPTVYIAASPPNTDEMI) are disordered. A compositionally biased stretch (polar residues) spans 334 to 366 (QRNSSSKLRSSGPRTASTSSLVNSQTLNRNQPT). Residues Ser372, Ser450, Ser482, and Ser524 each carry the phosphoserine modification. The stretch at 532–619 (YTQALLVHQK…TKEIDLFQAR (88 aa)) forms a coiled coil. Lys562 participates in a covalent cross-link: Glycyl lysine isopeptide (Lys-Gly) (interchain with G-Cter in SUMO). The residue at position 582 (Ser582) is a Phosphoserine. Residue Lys611 forms a Glycyl lysine isopeptide (Lys-Gly) (interchain with G-Cter in ubiquitin) linkage. The tract at residues 640-663 (PVPPKPKDQRSTIKAPKTQDAEDE) is disordered. The segment at 663-693 (EEGAQWNCTACTFLNHPALIRCEQCEMPRHF) adopts a RanBP2-type zinc-finger fold. The tract at residues 675-685 (FLNHPALIRCE) is interaction with polyubiquitin.

In terms of assembly, interacts with MAP3K7 and TRAF6. Identified in the TRIKA2 complex composed of MAP3K7, TAB1 and TAB2. Binds 'Lys-63'-linked polyubiquitin chains. Interacts with NCOR1 and HDAC3 to form a ternary complex. Interacts (via C-terminal) with NUMBL (via PTB domain). Interacts (via the C-terminus) with DYNC2I2 (via WD domains). Interacts with RBCK1. Interacts with TRIM5. Interacts with TRIM38 (via B30.2/SPRY domain), leading to its translocation to lysosomes and degradation. Interacts with ASB1; this interaction promotes TAB2 stability. Post-translationally, SUMOylated by TRIM60; leading to inhibition of MAPK/NF-kappaB activation and the innate immune response. Ubiquitinated; following IL1 stimulation or TRAF6 overexpression. Ubiquitination involves RBCK1 leading to proteasomal degradation. Ubiquitinated at Lys-611 by TRIM45 leading to proteasomal degradation. In terms of processing, degraded in a lysosome-dependent manner following interaction with TRIM38. Post-translationally, phosphorylated. As to expression, widely expressed.

It localises to the membrane. Its subcellular location is the endosome membrane. The protein localises to the lysosome membrane. It is found in the cytoplasm. The protein resides in the cytosol. It localises to the nucleus. Its function is as follows. Adapter required to activate the JNK and NF-kappa-B signaling pathways through the specific recognition of 'Lys-63'-linked polyubiquitin chains by its RanBP2-type zinc finger (NZF). Acts as an adapter linking MAP3K7/TAK1 and TRAF6 to 'Lys-63'-linked polyubiquitin chains. The RanBP2-type zinc finger (NZF) specifically recognizes Lys-63'-linked polyubiquitin chains unanchored or anchored to the substrate proteins such as RIPK1/RIP1 and RIPK2: this acts as a scaffold to organize a large signaling complex to promote autophosphorylation of MAP3K7/TAK1, and subsequent activation of I-kappa-B-kinase (IKK) core complex by MAP3K7/TAK1. Also recognizes and binds Lys-63'-linked polyubiquitin chains of heterotypic 'Lys-63'-/'Lys-48'-linked branched ubiquitin chains. Regulates the IL1-mediated translocation of NCOR1 out of the nucleus. Involved in heart development. The sequence is that of TGF-beta-activated kinase 1 and MAP3K7-binding protein 2 (Tab2) from Mus musculus (Mouse).